Here is a 299-residue protein sequence, read N- to C-terminus: Probable lipid kinase YegS (299 aa).

The 132-residue stretch at 2 to 133 folds into the DAGKc domain; it reads AEFPASLLIL…IDMAQVNKQT (132 aa). ATP is bound by residues Thr-40, 66-72, and Thr-95; that span reads GDGTINE. The Mg(2+) site is built by Leu-215, Asp-218, and Leu-220. Glu-271 acts as the Proton acceptor in catalysis.

This sequence belongs to the diacylglycerol/lipid kinase family. YegS lipid kinase subfamily. Mg(2+) serves as cofactor. Ca(2+) is required as a cofactor.

Its subcellular location is the cytoplasm. Probably phosphorylates lipids; the in vivo substrate is unknown. This Escherichia coli O6:K15:H31 (strain 536 / UPEC) protein is Probable lipid kinase YegS.